Reading from the N-terminus, the 82-residue chain is Small ribosomal subunit protein bS16 (82 aa).

This sequence belongs to the bacterial ribosomal protein bS16 family.

This chain is Small ribosomal subunit protein bS16, found in Vibrio cholerae serotype O1 (strain ATCC 39541 / Classical Ogawa 395 / O395).